Here is a 317-residue protein sequence, read N- to C-terminus: Methionyl-tRNA formyltransferase (317 aa).

Residue 110–113 participates in (6S)-5,6,7,8-tetrahydrofolate binding; that stretch reads SLLP.

It belongs to the Fmt family.

The catalysed reaction is L-methionyl-tRNA(fMet) + (6R)-10-formyltetrahydrofolate = N-formyl-L-methionyl-tRNA(fMet) + (6S)-5,6,7,8-tetrahydrofolate + H(+). In terms of biological role, attaches a formyl group to the free amino group of methionyl-tRNA(fMet). The formyl group appears to play a dual role in the initiator identity of N-formylmethionyl-tRNA by promoting its recognition by IF2 and preventing the misappropriation of this tRNA by the elongation apparatus. The chain is Methionyl-tRNA formyltransferase from Lactiplantibacillus plantarum (strain ATCC BAA-793 / NCIMB 8826 / WCFS1) (Lactobacillus plantarum).